The chain runs to 154 residues: Lipoprotein signal peptidase (154 aa).

Transmembrane regions (helical) follow at residues 8-28 (LYLIVSLLVIIADQLLKNYIV), 58-78 (IFSGQMILFYLISIAAIAVVI), and 88-108 (NGLFDTGLALVLGGIIGNFID). Active-site residues include D117 and D133. Residues 131-151 (IADSAITVGIILVFIYLIFIS) form a helical membrane-spanning segment.

The protein belongs to the peptidase A8 family.

The protein localises to the cell membrane. The enzyme catalyses Release of signal peptides from bacterial membrane prolipoproteins. Hydrolyzes -Xaa-Yaa-Zaa-|-(S,diacylglyceryl)Cys-, in which Xaa is hydrophobic (preferably Leu), and Yaa (Ala or Ser) and Zaa (Gly or Ala) have small, neutral side chains.. It functions in the pathway protein modification; lipoprotein biosynthesis (signal peptide cleavage). Functionally, this protein specifically catalyzes the removal of signal peptides from prolipoproteins. This is Lipoprotein signal peptidase from Lactobacillus johnsonii (strain CNCM I-12250 / La1 / NCC 533).